We begin with the raw amino-acid sequence, 451 residues long: Signal recognition particle 54 kDa protein (451 aa).

Residues 105-112 (GVQGTGKT), 187-191 (DTAGR), and 247-250 (TKMD) each bind GTP.

Belongs to the GTP-binding SRP family. SRP54 subfamily. As to quaternary structure, part of the signal recognition particle protein translocation system, which is composed of SRP and FtsY. Archaeal SRP consists of a 7S RNA molecule of 300 nucleotides and two protein subunits: SRP54 and SRP19.

Its subcellular location is the cytoplasm. The catalysed reaction is GTP + H2O = GDP + phosphate + H(+). In terms of biological role, involved in targeting and insertion of nascent membrane proteins into the cytoplasmic membrane. Binds to the hydrophobic signal sequence of the ribosome-nascent chain (RNC) as it emerges from the ribosomes. The SRP-RNC complex is then targeted to the cytoplasmic membrane where it interacts with the SRP receptor FtsY. This is Signal recognition particle 54 kDa protein from Acidianus ambivalens (Desulfurolobus ambivalens).